Reading from the N-terminus, the 482-residue chain is MVKICCIGAGYVGGPTMAVIALKCPDVEVVVVDISAPRIEGWNSERLPIYEPGLDDVVRQCRGRNLFFSTDVERHVADAGIVFVSVNTPTKTRGLGAGKAADLTYWESAARIIADVSRSDKIVVEKSTVPVKTAEAIEKILAHNSKGGNIRYQILSNPEFLAEGTAIQDLFSPDRVLIGGRETPEGRAAVAALKSIYARWVPDDRIITTNLWSAELSKLAANAFLAQRISSVNAISALCEATGADVTEVANSIGKDSRIGPRFLSASVGFGGSCFQKDILNLVYICECYGLPEVANYWHQVIRINDYQKSRFVNRVVSSMFNTVAGKKVAVLGFAFKKDTGDTRETPAIDVCKGLVGDKAVVSIYDPQVTEEQVQRDLVMNKFDWDHPRHLQPMSPSSAKHVAVSWDAYEAARGAHAVCILTEWDEFRRLDYQRMYDAMHKPAFLFDGRNVVDPDKLRRIGFVVYSIGKPLDHWLRDMPAVA.

Residues 8–13 (GAGYVG), Asp-33, Arg-38, 86–90 (VNTPT), 127–128 (ST), and Glu-163 each bind NAD(+). Residues 159-163 (EFLAE), 218-225 (KLAANAFL), and 258-271 (RIGPRFLSASVGFG) each bind substrate. Cys-274 (nucleophile) is an active-site residue. Position 274–277 (274–277 (CFQK)) interacts with NAD(+). 336-337 (FK) contacts substrate. Arg-344 serves as a coordination point for NAD(+). Ser-395 is modified (phosphoserine). Arg-449 provides a ligand contact to substrate.

It belongs to the UDP-glucose/GDP-mannose dehydrogenase family.

The enzyme catalyses UDP-alpha-D-glucose + 2 NAD(+) + H2O = UDP-alpha-D-glucuronate + 2 NADH + 3 H(+). It participates in nucleotide-sugar biosynthesis; UDP-alpha-D-glucuronate biosynthesis; UDP-alpha-D-glucuronate from UDP-alpha-D-glucose: step 1/1. Involved in the biosynthesis of UDP-glucuronic acid (UDP-GlcA), providing nucleotide sugars for cell-wall polymers. This chain is UDP-glucose 6-dehydrogenase 2 (UGD2), found in Oryza sativa subsp. japonica (Rice).